Here is a 261-residue protein sequence, read N- to C-terminus: Triosephosphate isomerase (261 aa).

10–12 (NWK) contributes to the substrate binding site. His-100 functions as the Electrophile in the catalytic mechanism. Glu-172 functions as the Proton acceptor in the catalytic mechanism. Substrate contacts are provided by residues Gly-178, Ser-218, and 239–240 (GG).

It belongs to the triosephosphate isomerase family. In terms of assembly, homodimer.

Its subcellular location is the cytoplasm. The catalysed reaction is D-glyceraldehyde 3-phosphate = dihydroxyacetone phosphate. The protein operates within carbohydrate biosynthesis; gluconeogenesis. It participates in carbohydrate degradation; glycolysis; D-glyceraldehyde 3-phosphate from glycerone phosphate: step 1/1. In terms of biological role, involved in the gluconeogenesis. Catalyzes stereospecifically the conversion of dihydroxyacetone phosphate (DHAP) to D-glyceraldehyde-3-phosphate (G3P). This Mycobacterium bovis (strain BCG / Pasteur 1173P2) protein is Triosephosphate isomerase.